Reading from the N-terminus, the 127-residue chain is MKLTIIRLEKFSDQDRIDLQKIWPEYSPSSLQVDDNHRIYAARFNERLLAAVRVTLSGTEGALDSLRVREVTRRRGVGQYLLEEVLRNNPGVSCWWMADAGVEDRGVMTAFMQALGFTAQQGGWEKC.

The N-acetyltransferase domain occupies 1 to 127 (MKLTIIRLEK…TAQQGGWEKC (127 aa)). 2 interaction with PanD regions span residues 43–48 (RFNERL) and 66–76 (LRVREVTRRRG). CoA-binding positions include 66–68 (LRV) and 72–79 (TRRRGVGQ).

This sequence belongs to the PanZ/PanM family. In terms of assembly, interacts with PanD in the presence of CoA. Forms a heterooctameric complex composed of four PanD subunits and four PanZ subunits. Monomer in solution.

Activation of PanD processing occurs even at low CoA concentrations. In contrast, full inhibition of PanD catalytic activity only occurs at sufficiently high CoA concentrations. In terms of biological role, controls both the activation and catalytic activity of PanD in a coenzyme A (CoA)-dependent fashion. Binding of CoA or a derivative to PanZ leads to interaction with PanD, which promotes the processing and activation of pro-PanD, and subsequent substrate-mediated inhibition of the active form of PanD. Inhibition of PanD activity is probably the primary metabolic role of PanZ, allowing negative feedback regulation of pantothenate biosynthesis by CoA. The chain is PanD regulatory factor from Escherichia coli (strain K12).